A 1233-amino-acid polypeptide reads, in one-letter code: Structural maintenance of chromosomes protein 1A (1233 aa).

32 to 39 (GPNGSGKS) contributes to the ATP binding site. Coiled coils occupy residues 104 to 124 (EYKINNKVVQLHEYSEELEKL) and 163 to 503 (ELAQ…KAEI). Positions 284–293 (IKEKDSELNQ) are enriched in basic and acidic residues. Disordered regions lie at residues 284–308 (IKEKDSELNQKRPQYIKAKENTSHK) and 348–369 (QEFEERMEEESQSQGRDLTLEE). A phosphoserine mark is found at Ser-358 and Ser-360. An SMC hinge domain is found at 515–629 (VYGRLIDLCQ…DNVEDARRIA (115 aa)). An N6-acetyllysine mark is found at Lys-648 and Lys-713. A coiled-coil region spans residues 667 to 935 (DEKAVDKLKE…RHNLLQACKM (269 aa)). Positions 947 to 969 (MDDISQEEGSSQGEESVSGSQRT) are disordered. The span at 953–967 (EEGSSQGEESVSGSQ) shows a compositional bias: low complexity. Ser-957, Ser-962, Ser-966, and Ser-970 each carry phosphoserine. Residues 988 to 1068 (EDLKDAQAEE…FEQIKKERFD (81 aa)) are a coiled coil. Position 1037 is an N6-acetyllysine (Lys-1037).

The protein belongs to the SMC family. SMC1 subfamily. Forms a heterodimer with SMC3 in cohesin complexes. Cohesin complexes are composed of the SMC1 (SMC1A or SMC1B) and SMC3 heterodimer attached via their SMC hinge domain, RAD21 which link them, and one STAG protein (STAG1, STAG2 or STAG3), which interacts with RAD21. In germ cell cohesin complexes, SMC1A is mutually exclusive with SMC1B. Interacts with STAG3. Found in a complex with CDCA5, SMC3 and RAD21, PDS5A/SCC-112 and PDS5B/APRIN. Found in a complex containing POLE and SMC3. Interacts with BRCA1, SYCP2, NDC80, RPGR and BRAT1. The cohesin complex interacts with the cohesin loading complex subunits NIPBL/Scc2 (via HEAT repeats) and MAU2/Scc4. NIPBL directly contacts all members of the complex, RAD21, SMC1A/B, SMC3 and STAG1. In terms of processing, phosphorylated upon ionizing radiation or DNA methylation. Phosphorylation of Ser-957 and Ser-966 activates it and is required for S-phase checkpoint activation. Ubiquitinated by the DCX(DCAF15) complex, leading to its degradation. In terms of tissue distribution, ubiquitous (at protein level).

The protein resides in the nucleus. Its subcellular location is the chromosome. It is found in the centromere. Functionally, involved in chromosome cohesion during cell cycle and in DNA repair. Involved in DNA repair via its interaction with BRCA1 and its related phosphorylation by ATM, and works as a downstream effector in the ATM/NBS1 branch of S-phase checkpoint. Central component of cohesin complex. The cohesin complex is required for the cohesion of sister chromatids after DNA replication. The cohesin complex apparently forms a large proteinaceous ring within which sister chromatids can be trapped. At anaphase, the complex is cleaved and dissociates from chromatin, allowing sister chromatids to segregate. The cohesin complex may also play a role in spindle pole assembly during mitosis. Involved in DNA repair via its interaction with BRCA1 and its related phosphorylation by ATM, or via its phosphorylation by ATR. Works as a downstream effector both in the ATM/NBS1 branch and in the ATR/MSH2 branch of S-phase checkpoint. The sequence is that of Structural maintenance of chromosomes protein 1A (Smc1a) from Mus musculus (Mouse).